The primary structure comprises 723 residues: Polyribonucleotide nucleotidyltransferase (723 aa).

The Mg(2+) site is built by aspartate 488 and aspartate 494. Residues 555-614 (PKIITLNIKPEKIKDVIGPGGKQINAIIDETGVKIDIEQDGTVYIASQDQAMNRKAIAII) enclose the KH domain. Residues 624 to 692 (GEVYTGKVRR…QQGRVNLSRK (69 aa)) enclose the S1 motif domain. The tract at residues 692-723 (KALLEKKEQPEGDKKPQAEKKFYPKTKKPESK) is disordered. Positions 693–723 (ALLEKKEQPEGDKKPQAEKKFYPKTKKPESK) are enriched in basic and acidic residues.

Belongs to the polyribonucleotide nucleotidyltransferase family. The cofactor is Mg(2+).

It localises to the cytoplasm. The catalysed reaction is RNA(n+1) + phosphate = RNA(n) + a ribonucleoside 5'-diphosphate. Functionally, involved in mRNA degradation. Catalyzes the phosphorolysis of single-stranded polyribonucleotides processively in the 3'- to 5'-direction. The sequence is that of Polyribonucleotide nucleotidyltransferase from Listeria monocytogenes serotype 4a (strain HCC23).